The chain runs to 261 residues: Carnitinyl-CoA dehydratase (261 aa).

The Nucleophile role is filled by Glu-111. Glu-131 functions as the Proton acceptor in the catalytic mechanism.

It belongs to the enoyl-CoA hydratase/isomerase family.

The enzyme catalyses (R)-carnitinyl-CoA = crotonobetainyl-CoA + H2O. It functions in the pathway amine and polyamine metabolism; carnitine metabolism. Functionally, catalyzes the reversible dehydration of L-carnitinyl-CoA to crotonobetainyl-CoA. The protein is Carnitinyl-CoA dehydratase of Salmonella arizonae (strain ATCC BAA-731 / CDC346-86 / RSK2980).